We begin with the raw amino-acid sequence, 199 residues long: NAD(P)H dehydrogenase (quinone) 1 (199 aa).

Residues 4–190 (VLVLYYSAYG…EAARFQGAHV (187 aa)) form the Flavodoxin-like domain. Residues 10–15 (SAYGHI) and 78–80 (TRY) each bind FMN. Tyr-12 is an NAD(+) binding site. Trp-98 is a substrate binding site. FMN-binding positions include 113–119 (SSATQHG) and His-134.

Belongs to the WrbA family. FMN is required as a cofactor.

It carries out the reaction a quinone + NADH + H(+) = a quinol + NAD(+). The catalysed reaction is a quinone + NADPH + H(+) = a quinol + NADP(+). In Rhizobium meliloti (strain 1021) (Ensifer meliloti), this protein is NAD(P)H dehydrogenase (quinone) 1.